The following is a 726-amino-acid chain: Dipeptidyl-peptidase 5 (726 aa).

The signal sequence occupies residues 1–19; it reads MAAAKWLIASLAFASSGLA. N-linked (GlcNAc...) asparagine glycosylation is found at N96 and N252. Positions 269–291 are disordered; it reads AEPINKRNGPRTPQGIEGASSSP. S558 acts as the Charge relay system in catalysis. The N-linked (GlcNAc...) asparagine glycan is linked to N605. Active-site charge relay system residues include D641 and H673. N699 carries an N-linked (GlcNAc...) asparagine glycan.

It belongs to the peptidase S9C family.

The protein localises to the secreted. Extracellular dipeptidyl-peptidase which removes N-terminal dipeptides sequentially from polypeptides having unsubstituted N-termini. Contributes to pathogenicity. The chain is Dipeptidyl-peptidase 5 (DPP5) from Trichophyton tonsurans (Scalp ringworm fungus).